The sequence spans 143 residues: MGRRQARETALQVLFQIDLGKTEPDLALNNTAEEFGAGPQEIEFARQLVMGTLEHIEEIDAMIGKVSKEWQLNRMANVDRNIMRLAIFEMNYRADIPKSVSVNEALELSKIFGTPDSVRFINGILGKLLDNKDEAAPVISSLE.

Belongs to the NusB family.

Its function is as follows. Involved in transcription antitermination. Required for transcription of ribosomal RNA (rRNA) genes. Binds specifically to the boxA antiterminator sequence of the ribosomal RNA (rrn) operons. This is Transcription antitermination protein NusB from Desulforamulus reducens (strain ATCC BAA-1160 / DSM 100696 / MI-1) (Desulfotomaculum reducens).